The following is a 101-amino-acid chain: Apolipoprotein C-II (101 aa).

The first 22 residues, 1-22 (MGIRYLLVLVLVLLVLGCEVQG), serve as a signal peptide directing secretion. The lipid binding stretch occupies residues 66–74 (TVDEKIREI). A lipoprotein lipase cofactor region spans residues 78–101 (STAAVSTYAGIFTDQLLSMLKGDQ).

This sequence belongs to the apolipoprotein C2 family. Post-translationally, proapolipoprotein C-II is synthesized as a sialic acid containing glycoprotein which is subsequently desialylated prior to its proteolytic processing. In terms of processing, proapolipoprotein C-II, the major form found in plasma undergoes proteolytic cleavage of its N-terminal hexapeptide to generate apolipoprotein C-II, which occurs as the minor form in plasma.

Its subcellular location is the secreted. Its function is as follows. Component of chylomicrons, very low-density lipoproteins (VLDL), low-density lipoproteins (LDL), and high-density lipoproteins (HDL) in plasma. Plays an important role in lipoprotein metabolism as an activator of lipoprotein lipase. Both proapolipoprotein C-II and apolipoprotein C-II can activate lipoprotein lipase. This chain is Apolipoprotein C-II (APOC2), found in Mirounga angustirostris (Northern elephant seal).